Reading from the N-terminus, the 78-residue chain is Protein SlyX homolog (78 aa).

It belongs to the SlyX family.

The chain is Protein SlyX homolog from Xanthomonas campestris pv. campestris (strain 8004).